We begin with the raw amino-acid sequence, 299 residues long: tRNA dimethylallyltransferase (299 aa).

11–18 (GPTAVGKT) lines the ATP pocket. 13–18 (TAVGKT) provides a ligand contact to substrate. Residues 36–39 (DSQQ) are interaction with substrate tRNA.

It belongs to the IPP transferase family. Monomer. Mg(2+) serves as cofactor.

The enzyme catalyses adenosine(37) in tRNA + dimethylallyl diphosphate = N(6)-dimethylallyladenosine(37) in tRNA + diphosphate. Its function is as follows. Catalyzes the transfer of a dimethylallyl group onto the adenine at position 37 in tRNAs that read codons beginning with uridine, leading to the formation of N6-(dimethylallyl)adenosine (i(6)A). This is tRNA dimethylallyltransferase from Streptococcus pyogenes serotype M18 (strain MGAS8232).